The following is a 313-amino-acid chain: tRNA(Ile)-lysidine synthase (313 aa).

Residue 37-42 (SGGPDS) coordinates ATP.

The protein belongs to the tRNA(Ile)-lysidine synthase family.

It localises to the cytoplasm. It carries out the reaction cytidine(34) in tRNA(Ile2) + L-lysine + ATP = lysidine(34) in tRNA(Ile2) + AMP + diphosphate + H(+). In terms of biological role, ligates lysine onto the cytidine present at position 34 of the AUA codon-specific tRNA(Ile) that contains the anticodon CAU, in an ATP-dependent manner. Cytidine is converted to lysidine, thus changing the amino acid specificity of the tRNA from methionine to isoleucine. The protein is tRNA(Ile)-lysidine synthase of Corynebacterium efficiens (strain DSM 44549 / YS-314 / AJ 12310 / JCM 11189 / NBRC 100395).